Reading from the N-terminus, the 297-residue chain is HTH-type transcriptional regulator ArgP (297 aa).

An HTH lysR-type domain is found at 4–60; the sequence is PDYRTLQALDAVIRERGFERAAQKLCITQSAVSQRIKQLENLFGQPLLVRTVPPRPT. The H-T-H motif DNA-binding region spans 21–40; that stretch reads FERAAQKLCITQSAVSQRIK.

The protein belongs to the LysR transcriptional regulatory family. Homodimer.

In terms of biological role, controls the transcription of genes involved in arginine and lysine metabolism. This is HTH-type transcriptional regulator ArgP from Serratia proteamaculans (strain 568).